A 295-amino-acid polypeptide reads, in one-letter code: Xyloglucan endotransglucosylase/hydrolase (295 aa).

An N-terminal signal peptide occupies residues 1–23 (MAVSSTPWALVALFLMASSTVMA). In terms of domain architecture, GH16 spans 25 to 222 (PPRKAIDVPF…WANAPFIASY (198 aa)). Glutamate 108 serves as the catalytic Nucleophile. Glutamate 112 functions as the Proton donor in the catalytic mechanism. Glutamate 112 is a binding site for xyloglucan. Residue asparagine 116 is glycosylated (N-linked (GlcNAc...) asparagine). Residues 125–127 (QTN), 135–137 (NRE), 201–202 (DW), and glycine 206 contribute to the xyloglucan site. Cystine bridges form between cysteine 230-cysteine 239 and cysteine 276-cysteine 289. Arginine 281 serves as a coordination point for xyloglucan.

It belongs to the glycosyl hydrolase 16 family. XTH group 1 subfamily. Contains at least one intrachain disulfide bond essential for its enzymatic activity. In terms of processing, the N-glycan consists of an (GlcNAc)2(Hex)6 oligosaccharide; not essential for its enzymatic activity.

The protein localises to the secreted. The protein resides in the cell wall. It localises to the extracellular space. Its subcellular location is the apoplast. The catalysed reaction is breaks a beta-(1-&gt;4) bond in the backbone of a xyloglucan and transfers the xyloglucanyl segment on to O-4 of the non-reducing terminal glucose residue of an acceptor, which can be a xyloglucan or an oligosaccharide of xyloglucan.. Its function is as follows. Catalyzes xyloglucan endohydrolysis (XEH) and/or endotransglycosylation (XET). Cleaves and religates xyloglucan polymers, an essential constituent of the primary cell wall, and thereby participates in cell wall construction of growing tissues. The protein is Xyloglucan endotransglucosylase/hydrolase (XET16A) of Brassica oleracea var. botrytis (Cauliflower).